The following is a 319-amino-acid chain: Transcription elongation factor A protein 1 (319 aa).

In terms of domain architecture, TFIIS N-terminal spans 1–78; it reads MQEIIKCREQ…DKWKQDIEGT (78 aa). The segment covering 78-106 has biased composition (low complexity); the sequence is TSATTTSSSSSSSSSTTSTTTTKTASPSE. A disordered region spans residues 78–146; that stretch reads TSATTTSSSS…TTPKTSSPPI (69 aa). Positions 107–122 are enriched in basic and acidic residues; sequence SLKRKSISEDTSDRPT. A compositionally biased stretch (low complexity) spans 133-146; the sequence is ISPPTTPKTSSPPI. The region spanning 160–272 is the TFIIS central domain; sequence LRNKTIQLFV…ASMLGQNNEA (113 aa). The segment at 275–317 adopts a TFIIS-type zinc-finger fold; the sequence is DQFQCGKCKQRKCTYTQLQTRSADEPPTTFVKCCVKGCGNRWR. 4 residues coordinate Zn(2+): Cys-279, Cys-282, Cys-307, and Cys-312.

It belongs to the TFS-II family.

Its subcellular location is the nucleus. Functionally, necessary for efficient RNA polymerase II transcription elongation past template-encoded arresting sites. The arresting sites in DNA have the property of trapping a certain fraction of elongating RNA polymerases that pass through, resulting in locked ternary complexes. Cleavage of the nascent transcript by S-II allows the resumption of elongation from the new 3'-terminus. The polypeptide is Transcription elongation factor A protein 1 (tcea1) (Dictyostelium discoideum (Social amoeba)).